Here is a 447-residue protein sequence, read N- to C-terminus: Glutamyl-tRNA reductase (447 aa).

Residues 56–59 (TCNR), S119, 124–126 (ETQ), and Q130 each bind substrate. The Nucleophile role is filled by C57. 201–206 (GLGEMS) is a binding site for NADP(+).

Belongs to the glutamyl-tRNA reductase family. Homodimer.

It carries out the reaction (S)-4-amino-5-oxopentanoate + tRNA(Glu) + NADP(+) = L-glutamyl-tRNA(Glu) + NADPH + H(+). It functions in the pathway porphyrin-containing compound metabolism; protoporphyrin-IX biosynthesis; 5-aminolevulinate from L-glutamyl-tRNA(Glu): step 1/2. Catalyzes the NADPH-dependent reduction of glutamyl-tRNA(Glu) to glutamate 1-semialdehyde (GSA). This Helicobacter acinonychis (strain Sheeba) protein is Glutamyl-tRNA reductase.